A 394-amino-acid chain; its full sequence is S-adenosylmethionine synthase 2 (394 aa).

E11 serves as a coordination point for Mg(2+). H17 is an ATP binding site. E45 contacts K(+). L-methionine is bound by residues E58 and Q101. ATP is bound by residues 169-171, 237-240, D248, 254-255, A271, K275, and K279; these read DGK, SGRF, and RK. D248 serves as a coordination point for L-methionine. K279 serves as a coordination point for L-methionine.

Belongs to the AdoMet synthase family. Homotetramer. It depends on Mn(2+) as a cofactor. Mg(2+) is required as a cofactor. Co(2+) serves as cofactor. Requires K(+) as cofactor.

The protein resides in the cytoplasm. It catalyses the reaction L-methionine + ATP + H2O = S-adenosyl-L-methionine + phosphate + diphosphate. Its pathway is amino-acid biosynthesis; S-adenosyl-L-methionine biosynthesis; S-adenosyl-L-methionine from L-methionine: step 1/1. Its function is as follows. Catalyzes the formation of S-adenosylmethionine from methionine and ATP. The reaction comprises two steps that are both catalyzed by the same enzyme: formation of S-adenosylmethionine (AdoMet) and triphosphate, and subsequent hydrolysis of the triphosphate. This is S-adenosylmethionine synthase 2 (SAM2) from Hordeum vulgare (Barley).